Reading from the N-terminus, the 338-residue chain is Taste receptor type 2 member 39 (338 aa).

Residues 1 to 30 lie on the Extracellular side of the membrane; sequence MLGRCFPPDTKEKQQLRMTKLCDPAESELS. A helical transmembrane segment spans residues 31–51; it reads PFLITLILAVLLAEYLIGIIA. Topologically, residues 52–74 are cytoplasmic; it reads NGFIMAIHAAEWVQNKAVSTSGR. A helical transmembrane segment spans residues 75-95; the sequence is ILVFLSVSRIALQSLMMLEIT. At 96–116 the chain is on the extracellular side; it reads ISSTSLSFYSEDAVYYAFKIS. The helical transmembrane segment at 117 to 137 threads the bilayer; the sequence is FIFLNFCSLWFAAWLSFFYFV. At 138–156 the chain is on the cytoplasmic side; it reads KIANFSYPLFLKLRWRITG. The helical transmembrane segment at 157–177 threads the bilayer; sequence LIPWLLWLSVFISFSHSMFCI. Over 178–205 the chain is Extracellular; it reads NICTVYCNNSFPIHSSNSTKKTYLSEIN. Asn185 and Asn194 each carry an N-linked (GlcNAc...) asparagine glycan. Residues 206–226 form a helical membrane-spanning segment; sequence VVGLAFFFNLGIVTPLIMFIL. The Cytoplasmic segment spans residues 227-262; it reads TATLLILSLKRHTLHMGSNATGSNDPSMEAHMGAIK. A helical membrane pass occupies residues 263-283; sequence AISYFLILYIFNAVALFIYLS. The Extracellular portion of the chain corresponds to 284–291; that stretch reads NMFDINSL. A helical membrane pass occupies residues 292-312; the sequence is WNNLCQIIMAAYPASHSILLI. The Cytoplasmic segment spans residues 313–338; the sequence is QDNPGLRRAWKRLQLRLHLYPKEWTL.

Belongs to the G-protein coupled receptor T2R family. Expressed in subsets of taste receptor cells of the tongue and exclusively in gustducin-positive cells.

It is found in the membrane. Receptor that may play a role in the perception of bitterness and is gustducin-linked. May play a role in sensing the chemical composition of the gastrointestinal content. The activity of this receptor may stimulate alpha gustducin, mediate PLC-beta-2 activation and lead to the gating of TRPM5. In Homo sapiens (Human), this protein is Taste receptor type 2 member 39 (TAS2R39).